We begin with the raw amino-acid sequence, 801 residues long: DNA mismatch repair protein MutS (801 aa).

590-597 (GPNMSGKS) serves as a coordination point for ATP.

This sequence belongs to the DNA mismatch repair MutS family.

This protein is involved in the repair of mismatches in DNA. It is possible that it carries out the mismatch recognition step. This protein has a weak ATPase activity. This chain is DNA mismatch repair protein MutS, found in Thermotoga neapolitana (strain ATCC 49049 / DSM 4359 / NBRC 107923 / NS-E).